Consider the following 167-residue polypeptide: Probable membrane-bound hydrogenase subunit mbhJ (167 aa).

Residues Cys-35, Cys-38, Cys-102, and Cys-132 each coordinate [4Fe-4S] cluster.

This sequence belongs to the complex I 20 kDa subunit family. In terms of assembly, the membrane-bound hydrogenase complex is composed of MbhK and MbhL, but may also contain MbhJ. [4Fe-4S] cluster serves as cofactor.

It is found in the cell membrane. It carries out the reaction H2 + 2 oxidized [2Fe-2S]-[ferredoxin] = 2 reduced [2Fe-2S]-[ferredoxin] + 2 H(+). Inhibited by 0.1 mM Cu(2+). Functionally, probable subunit of a hydrogen-evolving hydrogenase that utilizes protons both as a substrate for hydrogen production and proton translocation. Acts by coupling the redox reaction via ferredoxin and iron-sulfur (Fe-S) clusters to proton translocation across the membrane, thereby conserving the redox energy in a proton gradient. The chain is Probable membrane-bound hydrogenase subunit mbhJ from Pyrococcus furiosus (strain ATCC 43587 / DSM 3638 / JCM 8422 / Vc1).